The chain runs to 195 residues: dCTP deaminase, dUMP-forming (195 aa).

Residues 105–110 (RSSLGR), Asp-123, 131–133 (TLE), Gln-152, Tyr-166, Lys-173, and Gln-177 each bind dCTP. Glu-133 serves as the catalytic Proton donor/acceptor. A disordered region spans residues 161–195 (PADRPYGDERGSKYQDQDGPQASRIRGDREFGGTQ). The segment covering 165-176 (PYGDERGSKYQD) has biased composition (basic and acidic residues). Over residues 185-195 (IRGDREFGGTQ) the composition is skewed to basic and acidic residues.

This sequence belongs to the dCTP deaminase family. In terms of assembly, homotrimer.

The catalysed reaction is dCTP + 2 H2O = dUMP + NH4(+) + diphosphate. The protein operates within pyrimidine metabolism; dUMP biosynthesis; dUMP from dCTP: step 1/1. Functionally, bifunctional enzyme that catalyzes both the deamination of dCTP to dUTP and the hydrolysis of dUTP to dUMP without releasing the toxic dUTP intermediate. The chain is dCTP deaminase, dUMP-forming from Halobacterium salinarum (strain ATCC 700922 / JCM 11081 / NRC-1) (Halobacterium halobium).